The following is a 191-amino-acid chain: Protein RER1 homolog (191 aa).

Transmembrane regions (helical) follow at residues 35–55 (AFRW…IILL), 57–77 (GFYI…LLFL), and 135–155 (FFDV…LTFL).

It belongs to the RER1 family.

It is found in the membrane. Its function is as follows. May be involved in protein transport along the secretory pathway. In Caenorhabditis elegans, this protein is Protein RER1 homolog (rer-1).